The chain runs to 154 residues: Myoglobin (154 aa).

The region spanning 2 to 148 (GLSDGEWELV…FRNDIAAKYK (147 aa)) is the Globin domain. S4 carries the phosphoserine modification. The residue at position 68 (T68) is a Phosphothreonine. H94 lines the heme b pocket.

This sequence belongs to the globin family. As to quaternary structure, monomeric.

It is found in the cytoplasm. The protein localises to the sarcoplasm. The catalysed reaction is Fe(III)-heme b-[protein] + nitric oxide + H2O = Fe(II)-heme b-[protein] + nitrite + 2 H(+). It carries out the reaction H2O2 + AH2 = A + 2 H2O. Functionally, monomeric heme protein which primary function is to store oxygen and facilitate its diffusion within muscle tissues. Reversibly binds oxygen through a pentacoordinated heme iron and enables its timely and efficient release as needed during periods of heightened demand. Depending on the oxidative conditions of tissues and cells, and in addition to its ability to bind oxygen, it also has a nitrite reductase activity whereby it regulates the production of bioactive nitric oxide. Under stress conditions, like hypoxia and anoxia, it also protects cells against reactive oxygen species thanks to its pseudoperoxidase activity. The protein is Myoglobin (MB) of Loxodonta africana (African elephant).